A 216-amino-acid polypeptide reads, in one-letter code: ATP-dependent Clp protease proteolytic subunit (216 aa).

Catalysis depends on Ser-101, which acts as the Nucleophile. His-126 is a catalytic residue.

It belongs to the peptidase S14 family. As to quaternary structure, component of the chloroplastic Clp protease core complex.

The protein resides in the plastid. It is found in the chloroplast stroma. The catalysed reaction is Hydrolysis of proteins to small peptides in the presence of ATP and magnesium. alpha-casein is the usual test substrate. In the absence of ATP, only oligopeptides shorter than five residues are hydrolyzed (such as succinyl-Leu-Tyr-|-NHMec, and Leu-Tyr-Leu-|-Tyr-Trp, in which cleavage of the -Tyr-|-Leu- and -Tyr-|-Trp bonds also occurs).. Cleaves peptides in various proteins in a process that requires ATP hydrolysis. Has a chymotrypsin-like activity. Plays a major role in the degradation of misfolded proteins. The polypeptide is ATP-dependent Clp protease proteolytic subunit (Zea mays (Maize)).